The primary structure comprises 460 residues: Putative RNA-guided DNA endonuclease MT2953 (460 aa).

Residues D224 and E313 contribute to the active site. Positions 372, 375, 389, and 392 each coordinate Zn(2+). The active site involves D399. Residues 415–460 form a disordered region; it reads VVGPVGAAVKRGADRKTGPGPAGGREARKATGHPAGEQPRDGVQVK.

In the N-terminal section; belongs to the transposase 2 family. The protein in the C-terminal section; belongs to the transposase 35 family.

In terms of biological role, an RNA-guided dsDNA endonuclease. When guided by an RNA derived from the right-end element of its insertion sequence element (IS), cleaves DNA downstream of the transposon-associated motif (TAM). Cleaves supercoiled and linear DNA in a staggered manner 15-21 bases from the TAM yielding 5'-overhangs. Binds reRNA, an approximately 150 nucleotide base sRNA derived from the 3' end of its own gene, the right end (RE) of the insertion sequence (IS) plus sequence downstream of the IS. This Mycobacterium tuberculosis (strain CDC 1551 / Oshkosh) protein is Putative RNA-guided DNA endonuclease MT2953.